The sequence spans 346 residues: WD repeat-containing protein LWD1 (346 aa).

M1 is subject to N-acetylmethionine. 4 WD repeats span residues E79 to E121, E133 to Q173, A176 to I214, and R265 to E305.

It localises to the nucleus. Its function is as follows. Clock protein essential for the proper expression phase and period length of both the oscillator and output genes known to participate in photoperiod sensing. Required for the expression of APRR9, APRR7, and APRR5. Regulated by APRR9 and APRR7 at the transcriptional level, indicating the existence of a positive feedback loop within the circadian clock. May function to delay the expression of the morning genes until dawn approaches. This chain is WD repeat-containing protein LWD1 (LWD1), found in Arabidopsis thaliana (Mouse-ear cress).